A 397-amino-acid polypeptide reads, in one-letter code: 1-deoxy-D-xylulose 5-phosphate reductoisomerase (397 aa).

Thr12, Gly13, Ser14, Ile15, Gly38, Lys39, Asn40, and Asn126 together coordinate NADPH. 1-deoxy-D-xylulose 5-phosphate is bound at residue Lys127. Residue Glu128 participates in NADPH binding. Mn(2+) is bound at residue Asp152. 1-deoxy-D-xylulose 5-phosphate is bound by residues Ser153, Glu154, Ser188, and His211. Glu154 serves as a coordination point for Mn(2+). Residue Gly217 participates in NADPH binding. Positions 224, 229, 230, and 233 each coordinate 1-deoxy-D-xylulose 5-phosphate. Glu233 is a binding site for Mn(2+).

The protein belongs to the DXR family. Mg(2+) is required as a cofactor. Mn(2+) serves as cofactor.

The catalysed reaction is 2-C-methyl-D-erythritol 4-phosphate + NADP(+) = 1-deoxy-D-xylulose 5-phosphate + NADPH + H(+). It participates in isoprenoid biosynthesis; isopentenyl diphosphate biosynthesis via DXP pathway; isopentenyl diphosphate from 1-deoxy-D-xylulose 5-phosphate: step 1/6. In terms of biological role, catalyzes the NADPH-dependent rearrangement and reduction of 1-deoxy-D-xylulose-5-phosphate (DXP) to 2-C-methyl-D-erythritol 4-phosphate (MEP). In Haemophilus influenzae (strain PittGG), this protein is 1-deoxy-D-xylulose 5-phosphate reductoisomerase.